Consider the following 62-residue polypeptide: MRCLPVFVILLLLIASAPSVDAQLKTKDDVPLASFHDNAKGTQHKRIINWCCLIFYQCCLRR.

The signal sequence occupies residues 1–22 (MRCLPVFVILLLLIASAPSVDA). The propeptide occupies 23 to 44 (QLKTKDDVPLASFHDNAKGTQH).

Belongs to the conotoxin T superfamily. In terms of processing, contains 2 disulfide bonds that can be either 'C1-C3, C2-C4' or 'C1-C4, C2-C3', since these disulfide connectivities have been observed for conotoxins with cysteine framework V (for examples, see AC P0DQQ7 and AC P81755). Expressed by the venom duct.

It is found in the secreted. This Conus spurius (Alphabet cone) protein is Conotoxin Sr5.7.